The sequence spans 154 residues: Spermatogenesis-associated protein 19, mitochondrial (154 aa).

The transit peptide at 1-24 (MIITTWIMYIFARKTVGLPFPPRV) directs the protein to the mitochondrion. A phosphoserine mark is found at S26 and S116.

As to expression, expressed specifically in adult testis (at protein level).

It localises to the mitochondrion outer membrane. The protein resides in the mitochondrion. The protein localises to the cell projection. Its subcellular location is the cilium. It is found in the flagellum. In terms of biological role, essential for sperm motility and male fertility. Plays an important role in sperm motility by regulating the organization and function of the mitochondria and is also required for correct sperm midpiece assembly. In Mus musculus (Mouse), this protein is Spermatogenesis-associated protein 19, mitochondrial (Spata19).